The sequence spans 389 residues: MGTNLSVPNPLGFFPDHQLDPAFGANSNNPDWDFNPNKDQWPEANQVGAGAFGPGFTPPHGGLLGWSPQAQGILTTVPAAPPPASTNRQSGRQPTPISPPLRDSHPQAMQWNSTTFHQALLDPRVRGLYFPAGGSSSGTVNPVPTIVSPISSIFSRTGDPAPNMESTTSGFLGPLLVLQAGFFLLTRILTIPQSLDSWWTSLNFLGEAPTCPGQNSQSPTSNHSPTSCPPICPGYRWMCLRRFIIFLFILLLCLIFLLVLLDYQGMLPVCPLLPGTSTTSTGPCKTCTIPAQGTSMFPSCCCTKPSDGNCTCIPIPSSWAFARFLWEWASVRFSWLSLLVPFVQWFAGLSPTVWLSVIWMMWYWGPSLYNILSPFLPLLPIFFCLWVYI.

Residue Met-1 is modified to N-acetylmethionine. Residue Gly-2 is the site of N-myristoyl glycine; by host attachment. The tract at residues 2–108 (GTNLSVPNPL…PPLRDSHPQA (107 aa)) is pre-S1. Residues 2 to 163 (GTNLSVPNPL…FSRTGDPAPN (162 aa)) form a pre-S region. The Virion surface; in external conformation portion of the chain corresponds to 2 to 170 (GTNLSVPNPL…APNMESTTSG (169 aa)). Residues 2-242 (GTNLSVPNPL…PGYRWMCLRR (241 aa)) are Intravirion; in internal conformation-facing. Positions 74-105 (LTTVPAAPPPASTNRQSGRQPTPISPPLRDSH) are disordered. The span at 85–95 (STNRQSGRQPT) shows a compositional bias: polar residues. A pre-S2 region spans residues 109–163 (MQWNSTTFHQALLDPRVRGLYFPAGGSSSGTVNPVPTIVSPISSIFSRTGDPAPN). Residues 171 to 191 (FLGPLLVLQAGFFLLTRILTI) form a helical membrane-spanning segment. The Intravirion; in external conformation portion of the chain corresponds to 192–242 (PQSLDSWWTSLNFLGEAPTCPGQNSQSPTSNHSPTSCPPICPGYRWMCLRR). Residues 243 to 263 (FIIFLFILLLCLIFLLVLLDY) traverse the membrane as a helical segment. Residues 264–337 (QGMLPVCPLL…WASVRFSWLS (74 aa)) lie on the Virion surface side of the membrane. The N-linked (GlcNAc...) asparagine; by host glycan is linked to Asn-309. Residues 338–358 (LLVPFVQWFAGLSPTVWLSVI) traverse the membrane as a helical segment. Over 359–364 (WMMWYW) the chain is Intravirion. Residues 365–387 (GPSLYNILSPFLPLLPIFFCLWV) traverse the membrane as a helical segment. The Virion surface portion of the chain corresponds to 388 to 389 (YI).

It belongs to the orthohepadnavirus major surface antigen family. As to quaternary structure, in its internal form (Li-HBsAg), interacts with the capsid protein and with the isoform S. Interacts with host chaperone CANX. In terms of assembly, associates with host chaperone CANX through its pre-S2 N glycan; this association may be essential for isoform M proper secretion. Interacts with isoform L. Interacts with the antigens of satellite virus HDV (HDVAgs); this interaction is required for encapsidation of HDV genomic RNA. Isoform M is N-terminally acetylated by host at a ratio of 90%, and N-glycosylated by host at the pre-S2 region. Post-translationally, myristoylated.

The protein resides in the virion membrane. Its function is as follows. The large envelope protein exists in two topological conformations, one which is termed 'external' or Le-HBsAg and the other 'internal' or Li-HBsAg. In its external conformation the protein attaches the virus to cell receptors and thereby initiating infection. This interaction determines the species specificity and liver tropism. This attachment induces virion internalization predominantly through caveolin-mediated endocytosis. The large envelope protein also assures fusion between virion membrane and endosomal membrane. In its internal conformation the protein plays a role in virion morphogenesis and mediates the contact with the nucleocapsid like a matrix protein. In terms of biological role, the middle envelope protein plays an important role in the budding of the virion. It is involved in the induction of budding in a nucleocapsid independent way. In this process the majority of envelope proteins bud to form subviral lipoprotein particles of 22 nm of diameter that do not contain a nucleocapsid. This chain is Large envelope protein, found in Hepatitis B virus genotype C subtype adr (isolate Japan/A4/1994) (HBV-C).